Consider the following 852-residue polypeptide: Lon protease homolog 2, peroxisomal (852 aa).

Ser-2 is modified (N-acetylserine). A Lon N-terminal domain is found at 13 to 222; it reads LPLLLTHESV…MTIPLLVRQI (210 aa). Residue 375 to 382 coordinates ATP; it reads GPPGVGKT. A Lon proteolytic domain is found at 651–837; it reads LSQPGVAIGL…DEVLNAAFDG (187 aa). Active-site residues include Ser-743 and Lys-786. Residues 850–852 carry the Microbody targeting signal motif; it reads SKL.

The protein belongs to the peptidase S16 family. As to quaternary structure, interacts with PEX5. Interacts with TYSND1. May interact with enzymes involved in beta-oxidation of fatty acids, including ACOX1/AOX.

It localises to the peroxisome matrix. The enzyme catalyses Hydrolysis of proteins in presence of ATP.. Functionally, ATP-dependent serine protease that mediates the selective degradation of misfolded and unassembled polypeptides in the peroxisomal matrix. Necessary for type 2 peroxisome targeting signal (PTS2)-containing protein processing and facilitates peroxisome matrix protein import. May indirectly regulate peroxisomal fatty acid beta-oxidation through degradation of the self-processed forms of TYSND1. In Mus musculus (Mouse), this protein is Lon protease homolog 2, peroxisomal (Lonp2).